We begin with the raw amino-acid sequence, 201 residues long: L(+)-tartrate dehydratase subunit beta (201 aa).

H37 is an active-site residue.

Belongs to the class-I fumarase family. As to quaternary structure, heterotetramer of two alpha and two beta subunits.

It catalyses the reaction (2R,3R)-tartrate = oxaloacetate + H2O. In Escherichia coli O6:K15:H31 (strain 536 / UPEC), this protein is L(+)-tartrate dehydratase subunit beta (ttdB).